The primary structure comprises 597 residues: Elongation factor 4 (597 aa).

One can recognise a tr-type G domain in the interval K2 to E184. GTP-binding positions include D14–T19 and N131–D134.

This sequence belongs to the TRAFAC class translation factor GTPase superfamily. Classic translation factor GTPase family. LepA subfamily.

It localises to the cell inner membrane. The enzyme catalyses GTP + H2O = GDP + phosphate + H(+). In terms of biological role, required for accurate and efficient protein synthesis under certain stress conditions. May act as a fidelity factor of the translation reaction, by catalyzing a one-codon backward translocation of tRNAs on improperly translocated ribosomes. Back-translocation proceeds from a post-translocation (POST) complex to a pre-translocation (PRE) complex, thus giving elongation factor G a second chance to translocate the tRNAs correctly. Binds to ribosomes in a GTP-dependent manner. This is Elongation factor 4 from Vibrio vulnificus (strain CMCP6).